Reading from the N-terminus, the 927-residue chain is Band 3 anion transport protein (927 aa).

The residue at position 1 (Met1) is an N-acetylmethionine. At 1 to 420 (MGDMQDHEKV…LSDITDALSP (420 aa)) the chain is on the cytoplasmic side. Phosphoserine is present on Ser18. Tyr31 and Tyr56 each carry phosphotyrosine. Positions 69-303 (SQVYVELQEL…LGRAAATLMT (235 aa)) are globular. Positions 190-199 (AVLTRSGAPS) are interaction with ANK1. A phosphoserine mark is found at Ser199 and Ser222. The tract at residues 317 to 370 (RGELLSSLDSFLDCSLVLPPTEAPSEKALLNLVPVQKELLRKRYLPRPAKPDPN) is dimerization arm. The tract at residues 367 to 390 (PDPNLYEALDGGKEGPGDEDDPLR) is disordered. Tyr372 carries the phosphotyrosine modification. The chain crosses the membrane as a helical span at residues 421–444 (QVLAAVIFIYFAALSPAVTFGGLL). Residues 445–452 (GEKTRNLM) lie on the Extracellular side of the membrane. Residues 453 to 473 (GVSELLISTAVQGILFALLGA) form a helical membrane-spanning segment. Topologically, residues 474-476 (QPL) are cytoplasmic. The chain crosses the membrane as a discontinuously helical span at residues 477–493 (LVLGFSGPLLVFEEAFY). Over 494–502 (SFCESNNLE) the chain is Extracellular. Residues 503–523 (YIVGRAWIGFWLILLVVLVVA) form a helical membrane-spanning segment. Residues 524–535 (FEGSFLVQYISR) lie on the Cytoplasmic side of the membrane. Residues 536-558 (YTQEIFSFLISLIFIYETFSKLI) traverse the membrane as a helical segment. Over 559 to 586 (KIFQDYPLQESYAPVVMKPKPQGPVPNT) the chain is Extracellular. The chain crosses the membrane as a helical span at residues 587 to 607 (ALLSLVLMVGTFLLAMMLRKF). Topologically, residues 608–618 (KNSTYFPGKLR) are cytoplasmic. Residues 619 to 639 (RVIGDFGVPISILIMVLVDTF) traverse the membrane as a helical segment. The Extracellular segment spans residues 640–679 (IKNTYTQKLSVPDGLKVSNSSARGWVIHPLGLYNHFPKWM). N-linked (GlcNAc...) asparagine glycosylation occurs at Asn658. A helical transmembrane segment spans residues 680 to 700 (MFASVLPALLVFILIFLESQI). Topologically, residues 701–716 (TTLIVSKPERKMIKGS) are cytoplasmic. The helical transmembrane segment at 717 to 735 (GFHLDLLLVVGMGGVAALF) threads the bilayer. The chain crosses the membrane as a discontinuously helical span at residues 736 to 753 (GMPWLSATTVRSVTHANA). Topologically, residues 754-776 (LTVMGKASGPGAAAQIQEVKEQR) are cytoplasmic. 2 consecutive transmembrane segments (helical) span residues 777–797 (ISGL…PILS) and 798–816 (RIPL…ITSL). The Cytoplasmic segment spans residues 817-854 (SGIQLFDRILLLFKPPKYHPDVPFVKRVKTWRMHLFTG). The segment at residues 855–885 (IQIICLAVLWVVKSTPASLALPFVLILTVPL) is an intramembrane region (discontinuously helical). Cys859 carries the S-palmitoyl cysteine lipid modification. Residues 886–927 (RRLLLPLIFRELELQCLDGDDAKVTFDEAEGLDEYDEVPMPV) are Cytoplasmic-facing. The residue at position 920 (Tyr920) is a Phosphotyrosine.

This sequence belongs to the anion exchanger (TC 2.A.31) family. A dimer in solution, but in its membrane environment, it exists primarily as a mixture of dimers and tetramers and spans the membrane asymmetrically. Component of the ankyrin-1 complex in the erythrocyte, composed of ANK1, RHCE, RHAG, SLC4A1, EPB42, GYPA, GYPB and AQP1. Interacts with STOM; this interaction positively regulates SLC4A1 activity. Interacts with GYPA; a GYPA monomer is bound at each end of the SLC4A1 dimer forming a heterotetramer. Three SLC4A1 dimers (Band 3-I, Band 3-II and Band 3-III) participates in the ankyrin-1 complex. Interacts (via the cytoplasmic domain) with EPB42; this interaction is mediated by the SLC4A1 Band 3-I dimer. Interacts (via the cytoplasmic domain) directly with ANK1; this interaction is mediated by the SLC4A1 Band 3-II and Band 3-III dimers. As to quaternary structure, interacts with TMEM139. In terms of tissue distribution, kidney.

The protein localises to the cell membrane. The protein resides in the basolateral cell membrane. The enzyme catalyses hydrogencarbonate(in) + chloride(out) = hydrogencarbonate(out) + chloride(in). Its function is as follows. Functions both as a transporter that mediates electroneutral anion exchange across the cell membrane and as a structural protein. Component of the ankyrin-1 complex of the erythrocyte membrane; required for normal flexibility and stability of the erythrocyte membrane and for normal erythrocyte shape via the interactions of its cytoplasmic domain with cytoskeletal proteins, glycolytic enzymes, and hemoglobin. Functions as a transporter that mediates the 1:1 exchange of inorganic anions across the erythrocyte membrane. Mediates chloride-bicarbonate exchange in the kidney, and is required for normal acidification of the urine. The chain is Band 3 anion transport protein from Rattus norvegicus (Rat).